The following is a 314-amino-acid chain: 3'-5' exoribonuclease YhaM (314 aa).

One can recognise an HD domain in the interval 163-279 (HVVSMLDLAK…LHYIDNLDAK (117 aa)).

Belongs to the YhaM family.

Its function is as follows. Shows a 3'-5' exoribonuclease activity. This Bacillus anthracis (strain CDC 684 / NRRL 3495) protein is 3'-5' exoribonuclease YhaM.